Reading from the N-terminus, the 157-residue chain is Alpha-amylase/trypsin inhibitor RA16 (157 aa).

A signal peptide spans 1 to 26 (MASNKVVISALLVVVVSVLAATTTMA). 5 disulfides stabilise this stretch: Cys41-Cys89, Cys55-Cys77, Cys63-Cys121, Cys78-Cys137, and Cys91-Cys149.

Belongs to the cereal trypsin/alpha-amylase inhibitor family. Five disulfide bonds are present.

The protein resides in the secreted. Its function is as follows. Seed storage protein. This Oryza sativa subsp. japonica (Rice) protein is Alpha-amylase/trypsin inhibitor RA16.